We begin with the raw amino-acid sequence, 255 residues long: Flap endonuclease Xni (255 aa).

D105 contributes to the Mg(2+) binding site. One can recognise a 5'-3' exonuclease domain in the interval 162–253; the sequence is EHSQFIDYLA…NLSQFRLPNP (92 aa). Residues L172, A173, P181, V183, and I186 each contribute to the K(+) site. Residues 185-190 are interaction with DNA; that stretch reads GIGPKS.

Belongs to the Xni family. The cofactor is Mg(2+). K(+) is required as a cofactor.

Its function is as follows. Has flap endonuclease activity. During DNA replication, flap endonucleases cleave the 5'-overhanging flap structure that is generated by displacement synthesis when DNA polymerase encounters the 5'-end of a downstream Okazaki fragment. This Shewanella sediminis (strain HAW-EB3) protein is Flap endonuclease Xni.